A 71-amino-acid chain; its full sequence is Potassium voltage-gated channel subfamily E member 2 (71 aa).

The chain crosses the membrane as a helical span at residues valine 7–valine 27. At serine 28–asparagine 71 the chain is on the cytoplasmic side.

The protein belongs to the potassium channel KCNE family. Interacts with KCNB1. Associates with KCNH2/ERG1. May associate with KCNQ2 and KCNQ3. Associates with HCN1 and probably HCN2. Heteromultimer with KCNC2. Interacts with KCNC2. Interacts with KCNQ1; forms a heterooligomer complex that targets to the membrane raft and leading to currents with an apparently instantaneous activation, a rapid deactivation process and a linear current-voltage relationship and decreases the amplitude of the outward current. Detected in heart; expression is highest in the SA node and the right atrium, and barely detectable in the ventricle.

The protein resides in the cell membrane. It localises to the apical cell membrane. Ancillary protein that functions as a regulatory subunit of the voltage-gated potassium (Kv) channel complex composed of pore-forming and potassium-conducting alpha subunits and of regulatory beta subunits. KCNE2 beta subunit modulates the gating kinetics and enhances stability of the channel complex. Alters the gating of the delayed rectifier Kv channel containing KCNB1 alpha subunit. Associates with KCNH2/HERG alpha subunit Kv channel to form the rapidly activating component of the delayed rectifying potassium current (IKr) in heart. May associate with KCNQ2 and/or KCNQ3 alpha subunits to modulate the native M-type current. May associate with HCN1 and HCN2 channel subunits to increase potassium current. Forms a heterooligomer complex with KCNQ1/KVLQT1 alpha subunits which leads to currents with an apparently instantaneous activation, a rapid deactivation process and a linear current-voltage relationship and decreases the amplitude of the outward current. KCNQ1-KCNE2 channel associates with Na(+)-coupled myo-inositol symporter in the apical membrane of choroid plexus epithelium and regulates the myo-inositol gradient between blood and cerebrospinal fluid with an impact on neuron excitability. In Oryctolagus cuniculus (Rabbit), this protein is Potassium voltage-gated channel subfamily E member 2 (KCNE2).